Reading from the N-terminus, the 435-residue chain is MSTPKSDTCSPHQALARGMGFKNHHERLWWATFGPLLEKLLALCNYPVSLQYQHLSFIYHHLLPYLGPYPTVENGFAWKTAYSPDGTPAEVSLNFDGPKKTVRMDHVPISQWSGTPKDPFCQNVALELTKSLAGTLPDFTWDWFNHFVQTMFIPEPATDVVLAREPPNFRRMAMQSVNGCDLLTAGVRVKPVFNALWKSIETGIPHDKLLFDSIRNNTELFGAYLPALQVIEDYCQSDRAKEFQTRGCFLSFDATSIKDARLKVYLHGPQTAYMKVEDAFTLGGRLSNPNIQTGVKELRKLWYAVLNLPSDFPESEDLPATDDLYQGWLVNYELRPNNPVPEPKVYIPVAINNKDQDSIVQGLQEFFDRHESMDVRDYRDIFETLFLDAKNPTGIHHFITFSYKAHPYVTCYYKPHLEPVPAKELEESDVKGLSK.

L-tryptophan-binding positions include 81-82 and Glu90; that span reads AY. Substrate contacts are provided by Arg103, Lys190, Arg261, Lys263, Tyr265, Tyr346, and Tyr413.

The protein belongs to the tryptophan dimethylallyltransferase family.

Indole diterpene prenyltransferase; part of the ATM2 gene cluster that mediates the biosynthesis of aflatrem, a tremorgenic mycotoxin with acute neurotoxic effects. Synthesis of geranylgeranyl diphosphate (GGPP) by AtmG (a GGPP synthase) precedes condensation of GGPP with indole 3-glycerol phosphate, followed by epoxidation and cyclization by AtmM (a FAD-dependent monooxygenase) and AtmC (a prenyltransferase) to produce paspaline. AtmB is also essential for paspaline production, but its exact role has not been identified yet. AtmP, a cytochrome P450 monooxygenase, subsequently converts paspaline to 13-desoxypaxilline via PC-M6 by removal of the C-30 methyl group and oxidation at C-10. AtmQ, a cytochrome P450 monooxygenase, then catalyzes the oxidation of 13-desoxypaxilline, first at C-7 to produce paspalicine and then at C-13 to form paspalinine. Finally, AtmD prenylates paspalinine to form aflatrem. This Aspergillus flavus protein is Indole diterpene prenyltransferase atmD.